Here is a 102-residue protein sequence, read N- to C-terminus: uncharacterized protein (102 aa).

This is an uncharacterized protein from Escherichia coli (strain K12).